A 647-amino-acid chain; its full sequence is tRNA 5-methylaminomethyl-2-thiouridine biosynthesis bifunctional protein MnmC (647 aa).

Residues 1–235 (MSIPPFSQAS…KRDMLCGRFT (235 aa)) form a tRNA (mnm(5)s(2)U34)-methyltransferase region. The FAD-dependent cmnm(5)s(2)U34 oxidoreductase stretch occupies residues 250–647 (IGGGIAGTAS…RGLACHPLRR (398 aa)).

This sequence in the N-terminal section; belongs to the methyltransferase superfamily. tRNA (mnm(5)s(2)U34)-methyltransferase family. The protein in the C-terminal section; belongs to the DAO family. FAD serves as cofactor.

Its subcellular location is the cytoplasm. It catalyses the reaction 5-aminomethyl-2-thiouridine(34) in tRNA + S-adenosyl-L-methionine = 5-methylaminomethyl-2-thiouridine(34) in tRNA + S-adenosyl-L-homocysteine + H(+). Its function is as follows. Catalyzes the last two steps in the biosynthesis of 5-methylaminomethyl-2-thiouridine (mnm(5)s(2)U) at the wobble position (U34) in tRNA. Catalyzes the FAD-dependent demodification of cmnm(5)s(2)U34 to nm(5)s(2)U34, followed by the transfer of a methyl group from S-adenosyl-L-methionine to nm(5)s(2)U34, to form mnm(5)s(2)U34. This chain is tRNA 5-methylaminomethyl-2-thiouridine biosynthesis bifunctional protein MnmC, found in Methylobacillus flagellatus (strain ATCC 51484 / DSM 6875 / VKM B-1610 / KT).